The chain runs to 190 residues: Nascent polypeptide-associated complex subunit alpha (190 aa).

Disordered stretches follow at residues 20-42 (FDSD…AERK) and 123-155 (SLQN…VDAK). Positions 30-40 (HASDKVASRAE) are enriched in basic and acidic residues. Residues 37–102 (SRAERKSRKA…AKAEDMSQLA (66 aa)) form the NAC-A/B domain. The span at 138-151 (EEEEDDDSPIDEEG) shows a compositional bias: acidic residues. Positions 152 to 189 (VDAKDIDLVMQQVSCSRRKAVKALKESNGDLINAIMNA) constitute a UBA domain.

Belongs to the NAC-alpha family. As to quaternary structure, part of the nascent polypeptide-associated complex (NAC), consisting of EGD2 and EGD1. NAC associates with ribosomes via EGD1.

It localises to the cytoplasm. It is found in the nucleus. Functionally, component of the nascent polypeptide-associated complex (NAC), a dynamic component of the ribosomal exit tunnel, protecting the emerging polypeptides from interaction with other cytoplasmic proteins to ensure appropriate nascent protein targeting. The NAC complex also promotes mitochondrial protein import by enhancing productive ribosome interactions with the outer mitochondrial membrane and blocks the inappropriate interaction of ribosomes translating non-secretory nascent polypeptides with translocation sites in the membrane of the endoplasmic reticulum. EGD2 may also be involved in transcription regulation. The polypeptide is Nascent polypeptide-associated complex subunit alpha (EGD2) (Mycosarcoma maydis (Corn smut fungus)).